The chain runs to 326 residues: Membrane-associated kinase regulator 5 (326 aa).

Disordered stretches follow at residues 188 to 239 (TKKQ…GMSP) and 267 to 326 (GSRE…KISD). Composition is skewed to low complexity over residues 190–202 (KQSS…PTSS) and 270–305 (ESSL…SSDS).

As to expression, expressed in roots.

Its subcellular location is the cell membrane. It is found in the cytoplasm. It localises to the cytosol. Its function is as follows. Positive effector of CLE45 peptide signaling. Post-transcriptionally regulated amplifier of the CLE45 peptide signal that acts downstream of BAM3 in the regulation of the transition of root protophloem cells from proliferation to differentiation; thus preventing primary root elongation but stimulating lateral roots development. This Arabidopsis thaliana (Mouse-ear cress) protein is Membrane-associated kinase regulator 5.